A 342-amino-acid polypeptide reads, in one-letter code: Protein-ribulosamine 3-kinase, chloroplastic (342 aa).

The transit peptide at 1 to 46 directs the protein to the chloroplast; sequence MANVALLSAASPSTSSAAPRLRHVARRRPSRRSACPRSAASRLSIM. 141 to 143 is a binding site for ATP; it reads EFI. D246 functions as the Proton acceptor in the catalytic mechanism.

The protein belongs to the fructosamine kinase family.

Its subcellular location is the plastid. The protein localises to the chloroplast. It catalyses the reaction N(6)-D-ribulosyl-L-lysyl-[protein] + ATP = N(6)-(3-O-phospho-D-ribulosyl)-L-lysyl-[protein] + ADP + H(+). The catalysed reaction is N(6)-(D-erythrulosyl)-L-lysyl-[protein] + ATP = N(6)-(3-O-phospho-D-erythrulosyl)-L-lysyl-[protein] + ADP + H(+). Its function is as follows. Initiates a process leading to the deglycation of proteins. Phosphorylates low-molecular-mass and protein-bound erythrulosamines and ribulosamines, but not fructosamines or psicosamines, on the third carbon of the sugar moiety. Protein-bound erythrulosamine 3-phosphates and ribulosamine 3-phosphates are unstable and decompose under physiological conditions. In Oryza sativa subsp. japonica (Rice), this protein is Protein-ribulosamine 3-kinase, chloroplastic.